The sequence spans 389 residues: Chitin-binding protein CbpD (389 aa).

A signal peptide spans 1 to 25 (MKHYSATLALLPLTLALFLPQAAHA). The Chitin-binding type-4 domain maps to 26 to 208 (HGSMETPPSR…EAFYACIDVS (183 aa)). Tyr-37 carries the post-translational modification Phosphotyrosine. The residue at position 210 (Ser-210) is a Phosphoserine.

It localises to the secreted. Functionally, binds but does not hydrolyze chitin. In Pseudomonas aeruginosa (strain UCBPP-PA14), this protein is Chitin-binding protein CbpD (cpbD).